Consider the following 2472-residue polypeptide: Spectrin alpha chain, non-erythrocytic 1 (2472 aa).

An N-acetylmethionine modification is found at M1. Spectrin repeat units follow at residues 45–146 (RFQF…IKLL), 150–251 (KLVQ…QGKL), 256–358 (EVQR…ARLD), 361–465 (YRLQ…QYEQ), 468–570 (DLQL…AQLA), 574–676 (HLQQ…KLRE), 679–781 (QQQQ…QKLA), 785–888 (RLQQ…DLED), and 891–961 (QAQQ…QQVA). A Phosphoserine modification is found at S587. K637 carries the post-translational modification N6-acetyllysine. K803 carries the N6-acetyllysine modification. Residues S924, S982, S999, S1029, S1031, and S1041 each carry the phosphoserine modification. In terms of domain architecture, SH3 spans 967 to 1026 (TGKELVLALYDYQEKSPREVTMKKGDILTLLNSTNKDWWKVEVNDRQGFVPAAYVKKLDP). The Spectrin 10 repeat unit spans residues 1096-1166 (LFREANELQQ…LESEGLMAEE (71 aa)). The residue at position 1176 (Y1176) is a Phosphotyrosine. S1190, S1207, S1217, S1291, S1306, S1323, and S1338 each carry phosphoserine. The stretch at 1233-1336 (HEVQRFHRDA…RADQRKAKLG (104 aa)) is one Spectrin 11 repeat. Spectrin repeat units follow at residues 1339–1441 (HDLQ…RMML) and 1446–1549 (ELQL…KLGE). K1519 carries the N6-acetyllysine modification. Residues S1550, S1557, S1578, S1615, and S1647 each carry the phosphoserine modification. Spectrin repeat units lie at residues 1552–1656 (TLQQ…KLKE), 1659–1762 (KQQN…KLSE), 1764–1868 (HRLH…RLEE), 1871–1974 (EYQQ…KLDE), 1978–2081 (FLQF…KLLE), 2092–2194 (LFLT…LELQ), and 2206–2310 (LRQE…NLEQ). T2020 carries the post-translational modification Phosphothreonine. Position 2052 is an N6-acetyllysine (K2052). Position 2066 is a phosphothreonine (T2066). EF-hand domains are found at residues 2323 to 2358 (EALK…LGYD), 2366 to 2401 (EPDP…RETE), and 2404 to 2439 (KSSE…EQAD). The Ca(2+) site is built by D2336, D2338, S2340, R2342, E2347, D2379, N2381, D2383, H2385, and E2390. At K2421 the chain carries N6-acetyllysine.

The protein belongs to the spectrin family. In terms of assembly, like erythrocyte spectrin, the spectrin-like proteins are capable of forming dimers which can further associate to tetramers. Interacts (via C-terminal spectrin repeats) with TRPC4. Interacts with CALM and EMD. Interacts with isoform 1 of ACP1. Identified in a complex with ACTN4, CASK, IQGAP1, MAGI2, NPHS1 and SPTBN1. Interacts with SHANK3 (via ANK repeats). Interacts with CLN3; this interaction regulates the fodrin localization at the plasma membrane. Phosphorylation of Tyr-1176 decreases sensitivity to cleavage by calpain in vitro.

The protein localises to the cytoplasm. The protein resides in the cytoskeleton. It is found in the cell cortex. Fodrin, which seems to be involved in secretion, interacts with calmodulin in a calcium-dependent manner and is thus candidate for the calcium-dependent movement of the cytoskeleton at the membrane. The sequence is that of Spectrin alpha chain, non-erythrocytic 1 (Sptan1) from Mus musculus (Mouse).